The sequence spans 456 residues: Methylenetetrahydrofolate--tRNA-(uracil-5-)-methyltransferase TrmFO (456 aa).

Residue 11-16 (GGGLAG) coordinates FAD.

This sequence belongs to the MnmG family. TrmFO subfamily. FAD is required as a cofactor.

Its subcellular location is the cytoplasm. It catalyses the reaction uridine(54) in tRNA + (6R)-5,10-methylene-5,6,7,8-tetrahydrofolate + NADH + H(+) = 5-methyluridine(54) in tRNA + (6S)-5,6,7,8-tetrahydrofolate + NAD(+). The catalysed reaction is uridine(54) in tRNA + (6R)-5,10-methylene-5,6,7,8-tetrahydrofolate + NADPH + H(+) = 5-methyluridine(54) in tRNA + (6S)-5,6,7,8-tetrahydrofolate + NADP(+). Functionally, catalyzes the folate-dependent formation of 5-methyl-uridine at position 54 (M-5-U54) in all tRNAs. In Synechocystis sp. (strain ATCC 27184 / PCC 6803 / Kazusa), this protein is Methylenetetrahydrofolate--tRNA-(uracil-5-)-methyltransferase TrmFO.